Consider the following 110-residue polypeptide: Large ribosomal subunit protein uL22 (110 aa).

This sequence belongs to the universal ribosomal protein uL22 family. In terms of assembly, part of the 50S ribosomal subunit.

This protein binds specifically to 23S rRNA; its binding is stimulated by other ribosomal proteins, e.g. L4, L17, and L20. It is important during the early stages of 50S assembly. It makes multiple contacts with different domains of the 23S rRNA in the assembled 50S subunit and ribosome. Functionally, the globular domain of the protein is located near the polypeptide exit tunnel on the outside of the subunit, while an extended beta-hairpin is found that lines the wall of the exit tunnel in the center of the 70S ribosome. In Yersinia enterocolitica serotype O:8 / biotype 1B (strain NCTC 13174 / 8081), this protein is Large ribosomal subunit protein uL22.